Consider the following 287-residue polypeptide: Centromere protein P (287 aa).

Residues 1–37 (MDNSVYQVYEDEIQLLEEEIKLLSDKYEDIQQESTFF) adopt a coiled-coil conformation.

Belongs to the CENP-P/CTF19 family. Component of the CENPA-HI complex, at least composed of CENPH, CENPI, CENPK, CENPL, CENPM, CENPO and CENPP.

It localises to the nucleus. It is found in the chromosome. The protein resides in the centromere. Component of the CENPA-HI complex, a centromeric complex involved in assembly of kinetochore proteins, mitotic progression and chromosome segregation. In Gallus gallus (Chicken), this protein is Centromere protein P (CENPP).